The following is a 312-amino-acid chain: MDKEWLEVCIYTSSEALEAISGILYNTGVKGVSIEDPKDIEFKRKHPGDWDYFDETLLKVKDTAIVKGYYKEDDKFNEYLDYIKKSVSNLDQFGIDKGEGLVEVHEVNEEDWENNWKKYYKPTKVSNKIVIKPIWENYDKKQEEIIVELDPGMAFGTGTHETTRMCINALEKYIKEDRTVFDIGCGSGILSIAAAKLGAKHVIGVDLDPVAVKSSKENIKYNNLDNIEILEGNLMEVVEGRANIVVANIIADVIIFLTEGVKAFIEKGGYFIASGIINSRKEDVIKKLEETGFIIEEVREEGEWACIVSKIN.

T163, G184, D206, and N248 together coordinate S-adenosyl-L-methionine.

The protein belongs to the methyltransferase superfamily. PrmA family.

The protein resides in the cytoplasm. It carries out the reaction L-lysyl-[protein] + 3 S-adenosyl-L-methionine = N(6),N(6),N(6)-trimethyl-L-lysyl-[protein] + 3 S-adenosyl-L-homocysteine + 3 H(+). In terms of biological role, methylates ribosomal protein L11. The sequence is that of Ribosomal protein L11 methyltransferase from Clostridium botulinum (strain Okra / Type B1).